The sequence spans 196 residues: Ribosome maturation factor RimP (196 aa).

Residues 131–145 (KKKAGKKSQGKKAGK) are compositionally biased toward basic residues. The segment at 131–153 (KKKAGKKSQGKKAGKKTPQAPVQ) is disordered.

It belongs to the RimP family.

Its subcellular location is the cytoplasm. Its function is as follows. Required for maturation of 30S ribosomal subunits. This chain is Ribosome maturation factor RimP, found in Corynebacterium urealyticum (strain ATCC 43042 / DSM 7109).